The sequence spans 354 residues: Uroporphyrinogen decarboxylase (354 aa).

Substrate contacts are provided by residues 27–31, Asp-77, Tyr-154, Ser-209, and His-327; that span reads RQAGR.

This sequence belongs to the uroporphyrinogen decarboxylase family. In terms of assembly, homodimer.

It is found in the cytoplasm. The enzyme catalyses uroporphyrinogen III + 4 H(+) = coproporphyrinogen III + 4 CO2. It functions in the pathway porphyrin-containing compound metabolism; protoporphyrin-IX biosynthesis; coproporphyrinogen-III from 5-aminolevulinate: step 4/4. Catalyzes the decarboxylation of four acetate groups of uroporphyrinogen-III to yield coproporphyrinogen-III. This chain is Uroporphyrinogen decarboxylase, found in Shewanella baltica (strain OS185).